The sequence spans 105 residues: Small ribosomal subunit protein uS10 (105 aa).

The protein belongs to the universal ribosomal protein uS10 family. As to quaternary structure, part of the 30S ribosomal subunit.

In terms of biological role, involved in the binding of tRNA to the ribosomes. This is Small ribosomal subunit protein uS10 from Agathobacter rectalis (strain ATCC 33656 / DSM 3377 / JCM 17463 / KCTC 5835 / VPI 0990) (Eubacterium rectale).